A 147-amino-acid chain; its full sequence is Hemoglobin subunit beta-2 (147 aa).

A Globin domain is found at 3-147 (EWTDSERAII…VVSALGRQYH (145 aa)). Positions 64 and 93 each coordinate heme b.

The protein belongs to the globin family. In terms of assembly, hb 3 is a heterotetramer of two alpha-2 and two beta-2 chains. As to expression, red blood cells.

Involved in oxygen transport from gills to the various peripheral tissues. This chain is Hemoglobin subunit beta-2 (hbb2), found in Boreogadus saida (Polar cod).